The following is a 393-amino-acid chain: Probable RNA methyltransferase sce3898 (393 aa).

Catalysis depends on Glu82, which acts as the Proton acceptor. In terms of domain architecture, Radical SAM core spans 90-329 (RPGRYSACVS…VRSARLDAFR (240 aa)). Cys97 and Cys353 are oxidised to a cystine. Residues Cys104, Cys108, and Cys111 each coordinate [4Fe-4S] cluster. Residues 157–158 (GE), 212–214 (SLG), and Asn294 contribute to the S-adenosyl-L-methionine site. Cys353 (S-methylcysteine intermediate) is an active-site residue. Positions 357–393 (ARPSAEAQRPGGRRAPPRPGATAGAADVGPSAPPRPA) are disordered. Residues 373 to 382 (PRPGATAGAA) show a composition bias toward low complexity.

The protein belongs to the radical SAM superfamily. RlmN family. It depends on [4Fe-4S] cluster as a cofactor.

It localises to the cytoplasm. In Sorangium cellulosum (strain So ce56) (Polyangium cellulosum (strain So ce56)), this protein is Probable RNA methyltransferase sce3898.